Consider the following 556-residue polypeptide: Genetic interactor of prohibitins 3, mitochondrial (556 aa).

The transit peptide at 1 to 21 (MLNLCHALRGVRQFSCSVIVK) directs the protein to the mitochondrion. Positions 113–305 (ESTLNDILNY…LFDLPGYSTS (193 aa)) constitute a CP-type G domain.

This sequence belongs to the TRAFAC class YlqF/YawG GTPase family. GEP3 subfamily.

The protein resides in the mitochondrion. Functionally, interacts genetically with prohibitins and thus may be involved in the mitochondrial lipid metabolism. In Saccharomyces cerevisiae (strain ATCC 204508 / S288c) (Baker's yeast), this protein is Genetic interactor of prohibitins 3, mitochondrial (GEP3).